The chain runs to 223 residues: RNA-free ribonuclease P (223 aa).

Belongs to the HARP family.

The catalysed reaction is Endonucleolytic cleavage of RNA, removing 5'-extranucleotides from tRNA precursor.. Functionally, RNA-free RNase P that catalyzes the removal of the 5'-leader sequence from pre-tRNA to produce the mature 5'-terminus. This chain is RNA-free ribonuclease P, found in Methanococcus vannielii (strain ATCC 35089 / DSM 1224 / JCM 13029 / OCM 148 / SB).